We begin with the raw amino-acid sequence, 338 residues long: Pseudouridylate synthase TRUB1 (338 aa).

An N-acetylalanine modification is found at Ala-2. The Nucleophile role is filled by Asp-109.

This sequence belongs to the pseudouridine synthase TruB family.

Its subcellular location is the nucleus. It localises to the cytoplasm. It is found in the cytosol. The catalysed reaction is a uridine in mRNA = a pseudouridine in mRNA. It catalyses the reaction a uridine in tRNA = a pseudouridine in tRNA. It carries out the reaction uridine(55) in tRNA = pseudouridine(55) in tRNA. Its function is as follows. Pseudouridine synthase that catalyzes pseudouridylation of mRNAs and tRNAs. Mediates pseudouridylation of mRNAs with the consensus sequence 5'-GUUCNANNC-3', harboring a stem-loop structure. Constitutes the major pseudouridine synthase acting on mRNAs. Also catalyzes pseudouridylation of some tRNAs, including synthesis of pseudouridine(55) from uracil-55, in the psi GC loop of a subset of tRNAs. Promotes the processing of pri-let-7 microRNAs (pri-miRNAs) independently of its RNA pseudouridylate synthase activity. Acts by binding to the stem-loop structure on pri-let-7, preventing LIN28-binding (LIN28A and/or LIN28B), thereby enhancing the interaction between pri-let-7 and the microprocessor DGCR8, which mediates miRNA maturation. The polypeptide is Pseudouridylate synthase TRUB1 (Mus musculus (Mouse)).